Reading from the N-terminus, the 691-residue chain is Menaquinone reductase, molybdopterin-binding-like subunit (691 aa).

Residues 1–27 constitute a signal peptide (tat-type signal); sequence MALDRRGFLKFIGGATAGILATPVVWK. Residues 50-106 enclose the 4Fe-4S Mo/W bis-MGD-type domain; the sequence is NSYVPTVSKLCPTGIGVRVRLVDGRPVRVIGNPEHPLSKGGVSSIAAAEVQMLYSPA.

This sequence belongs to the prokaryotic molybdopterin-containing oxidoreductase family. As to quaternary structure, the Qrc complex is composed of four subunits: QrcA, QrcB, QrcC and QrcD. Can form a supercomplex with the [NiFe] hydrogenase HynA1 and the tetraheme Type I cytochrome c3 TpIc(3), its physiological electron donors. There is no molybdenum or tungsten pterin cofactor present in the Qrc complex, despite the similarity of QrcB to molybdopterin-containing oxidoreductases. is required as a cofactor. Predicted to be exported by the Tat system. The position of the signal peptide cleavage has not been experimentally proven.

Its subcellular location is the periplasm. In terms of biological role, component of the respiratory Qrc complex, that catalyzes the reduction of the menaquinone pool using electrons transferred from the reduced periplasmic cytochrome c3, and which is probably involved in sulfate respiration. Is likely essential for growth on H(2) or formate since the periplasmic hydrogenases and/or formate dehydrogenases act as primary electron donors for the Qrc complex. The function of the QrcB subunit is unknown; in the absence of a catalytic site, it may provide a structural scaffold for the other subunits. The polypeptide is Menaquinone reductase, molybdopterin-binding-like subunit (Nitratidesulfovibrio vulgaris (strain ATCC 29579 / DSM 644 / CCUG 34227 / NCIMB 8303 / VKM B-1760 / Hildenborough) (Desulfovibrio vulgaris)).